The sequence spans 415 residues: MLRLDTRFLPGFPEALSRHGPLLEEARRRLLAKRGEPGSMLGWMDLPEDTETLREVRRYREANPWVEDFVLIGIGGSALGPKALEAAFNESGVRFHYLDHVEPEPILRLLRTLDPRKTLVNAVSKSGSTAETLAGLAVFLKWLKAHLGEDWRRHLVVTTDPKEGPLRAFAEREGLKAFAIPKEVGGRFSALSPVGLLPLAFAGADLDALLMGARKANETALAPLEESLPLKTALLLHLHRHLPVHVFMVYSERLSHLPSWFVQLHDESLGKVDRQGQRVGTTAVPALGPKDQHAQVQLFREGPLDKLLALVIPEAPLEDVEIPEVEGLEAASYLFGKTLFQLLKAEAEATYEALAEAGQRVYALFLPEVSPYAVGWLMQHLMWQTAFLGELWEVNAFDQPGVELGKVLTRKRLAG.

Glu267 serves as the catalytic Proton donor. Catalysis depends on residues His293 and Lys406.

Belongs to the GPI family.

It is found in the cytoplasm. It catalyses the reaction alpha-D-glucose 6-phosphate = beta-D-fructose 6-phosphate. Its pathway is carbohydrate biosynthesis; gluconeogenesis. It participates in carbohydrate degradation; glycolysis; D-glyceraldehyde 3-phosphate and glycerone phosphate from D-glucose: step 2/4. Catalyzes the reversible isomerization of glucose-6-phosphate to fructose-6-phosphate. The sequence is that of Glucose-6-phosphate isomerase from Thermus thermophilus (strain ATCC 27634 / DSM 579 / HB8).